Consider the following 400-residue polypeptide: Subtilisin-like protease 7 (400 aa).

A signal peptide spans 1–20; that stretch reads MGFITKAIPLALAAASVING. The propeptide occupies 21–119; sequence AEIMETRAGV…IERDARVQIN (99 aa). The region spanning 36–118 is the Inhibitor I9 domain; sequence KYIVVMNDGM…YIERDARVQI (83 aa). A glycan (N-linked (GlcNAc...) asparagine) is linked at Asn-58. The Peptidase S8 domain occupies 129-400; the sequence is SWGLARVGSK…SKLINNGSGM (272 aa). Residues Asp-161 and His-192 each act as charge relay system in the active site. 2 N-linked (GlcNAc...) asparagine glycosylation sites follow: Asn-222 and Asn-252. Residue Ser-346 is the Charge relay system of the active site. N-linked (GlcNAc...) asparagine glycosylation is present at Asn-396.

Belongs to the peptidase S8 family.

Its subcellular location is the secreted. Its function is as follows. Secreted subtilisin-like serine protease with keratinolytic activity that contributes to pathogenicity. This chain is Subtilisin-like protease 7 (SUB7), found in Trichophyton verrucosum (Cattle ringworm fungus).